The chain runs to 111 residues: Capsid assembly protein Gp31 (111 aa).

Homoheptamer. Forms a stable complex with groEL in the presence of ATP.

In terms of biological role, essential for proper capsid assembly. In absence of Gp31 the major capsid protein (Gp23) assembles into 'lumps'. Acts as a co-chaperonin with the host groEL protein. The polypeptide is Capsid assembly protein Gp31 (31) (Escherichia coli (Bacteriophage T4)).